Reading from the N-terminus, the 201-residue chain is Small ribosomal subunit protein uS4c (201 aa).

Residues 89–149 (MRLDNILFRL…DEQKSRALIQ (61 aa)) form the S4 RNA-binding domain.

The protein belongs to the universal ribosomal protein uS4 family. In terms of assembly, part of the 30S ribosomal subunit. Contacts protein S5. The interaction surface between S4 and S5 is involved in control of translational fidelity.

The protein resides in the plastid. It is found in the chloroplast. Functionally, one of the primary rRNA binding proteins, it binds directly to 16S rRNA where it nucleates assembly of the body of the 30S subunit. Its function is as follows. With S5 and S12 plays an important role in translational accuracy. This Coffea arabica (Arabian coffee) protein is Small ribosomal subunit protein uS4c (rps4).